The sequence spans 723 residues: Catalase-peroxidase (723 aa).

Residues 96-224 (WHAAGTYRIQ…LAAVQMGLIY (129 aa)) constitute a cross-link (tryptophyl-tyrosyl-methioninium (Trp-Tyr) (with M-250)). Catalysis depends on His97, which acts as the Proton acceptor. Residues 224 to 250 (YVNPEGVNSQPDPIKTGEQVRVTFARM) constitute a cross-link (tryptophyl-tyrosyl-methioninium (Tyr-Met) (with W-96)). His265 provides a ligand contact to heme b.

Belongs to the peroxidase family. Peroxidase/catalase subfamily. Homodimer or homotetramer. Heme b serves as cofactor. Formation of the three residue Trp-Tyr-Met cross-link is important for the catalase, but not the peroxidase activity of the enzyme.

It catalyses the reaction H2O2 + AH2 = A + 2 H2O. The catalysed reaction is 2 H2O2 = O2 + 2 H2O. Functionally, bifunctional enzyme with both catalase and broad-spectrum peroxidase activity. The chain is Catalase-peroxidase from Marinobacter nauticus (strain ATCC 700491 / DSM 11845 / VT8) (Marinobacter aquaeolei).